Consider the following 302-residue polypeptide: Glutaminase (302 aa).

7 residues coordinate substrate: S61, N111, E155, N162, Y186, Y238, and V256.

Belongs to the glutaminase family. As to quaternary structure, homotetramer.

It carries out the reaction L-glutamine + H2O = L-glutamate + NH4(+). The chain is Glutaminase from Pseudomonas aeruginosa (strain LESB58).